We begin with the raw amino-acid sequence, 622 residues long: Palmitoyltransferase pfa3 (622 aa).

The Cytoplasmic segment spans residues 1–38 (MDATPYTTSSTSTALDSPSSLSATMARRWARKLERYCC). Residues 39–59 (TCVTYFPLAFVYSMTSWAAYV) traverse the membrane as a helical segment. The Vacuolar portion of the chain corresponds to 60-76 (DVSLSTTPSRVTWLGHS). Residues 77–97 (YGFIAVVLYLLANWCYTYAVF) form a helical membrane-spanning segment. Residues 98-175 (TSPGSTTNEY…ATCVGLRNHK (78 aa)) lie on the Cytoplasmic side of the membrane. One can recognise a DHHC domain in the interval 132–182 (RFCKKCQARKPDRAHHCSTCRRCVLKMDHHCPWLATCVGLRNHKAFLLFLI). Residues 176–196 (AFLLFLIYTSVFCWVSFAGSA) traverse the membrane as a helical segment. The Vacuolar portion of the chain corresponds to 197-217 (SWVWEEIMSNTTYVETLMPVN). A helical membrane pass occupies residues 218–238 (YIMLSVISGIIGIVLSAFCGW). Over 239-622 (HIYLASRGQT…EGRSNDDGVD (384 aa)) the chain is Cytoplasmic. Disordered stretches follow at residues 298–334 (PGVTRPEEGEEMRRMTTPSGSSQRNDLASQHNPELQA), 419–507 (REEQ…YADD), and 533–622 (DDVL…DGVD). Basic and acidic residues predominate over residues 302–311 (RPEEGEEMRR). Over residues 313-330 (TTPSGSSQRNDLASQHNP) the composition is skewed to polar residues. The segment covering 419–428 (REEQRQRERQ) has biased composition (basic and acidic residues). Polar residues predominate over residues 443 to 455 (YTPTWTPPNQQHP). The span at 466-488 (PSSQPQTQRNSNSSSPSFTPSRR) shows a compositional bias: low complexity. The segment covering 533 to 547 (DDVLNDDDDDDEDYF) has biased composition (acidic residues). The span at 610-622 (NGEEGRSNDDGVD) shows a compositional bias: basic and acidic residues.

It belongs to the DHHC palmitoyltransferase family. PFA3 subfamily. In terms of processing, autopalmitoylated.

The protein resides in the vacuole membrane. It carries out the reaction L-cysteinyl-[protein] + hexadecanoyl-CoA = S-hexadecanoyl-L-cysteinyl-[protein] + CoA. Palmitoyltransferase specific for vac8. Palmitoylates vac8 at one or more of its N-terminal cysteine residues, which is required for its proper membrane localization. This Neurospora crassa (strain ATCC 24698 / 74-OR23-1A / CBS 708.71 / DSM 1257 / FGSC 987) protein is Palmitoyltransferase pfa3 (ptr-3).